The following is a 237-amino-acid chain: NAD-dependent protein deacylase (237 aa).

The Deacetylase sirtuin-type domain occupies 1 to 235; the sequence is MRIAVLSGAG…PGLLQRLPAL (235 aa). 8–28 is an NAD(+) binding site; it reads GAGISAESGVPTFRDDKNGLW. Substrate is bound by residues Tyr53 and Arg56. NAD(+) is bound at residue 86–89; the sequence is QNVD. The active-site Proton acceptor is the His104. Positions 112, 115, 138, and 140 each coordinate Zn(2+). NAD(+)-binding positions include 177 to 179, 203 to 205, and Ala221; these read GTS and NPE.

This sequence belongs to the sirtuin family. Class III subfamily. Zn(2+) serves as cofactor.

The protein localises to the cytoplasm. It catalyses the reaction N(6)-acetyl-L-lysyl-[protein] + NAD(+) + H2O = 2''-O-acetyl-ADP-D-ribose + nicotinamide + L-lysyl-[protein]. The catalysed reaction is N(6)-succinyl-L-lysyl-[protein] + NAD(+) + H2O = 2''-O-succinyl-ADP-D-ribose + nicotinamide + L-lysyl-[protein]. Functionally, NAD-dependent lysine deacetylase and desuccinylase that specifically removes acetyl and succinyl groups on target proteins. Modulates the activities of several proteins which are inactive in their acylated form. This Mycolicibacterium paratuberculosis (strain ATCC BAA-968 / K-10) (Mycobacterium paratuberculosis) protein is NAD-dependent protein deacylase.